A 228-amino-acid chain; its full sequence is 3,4-dihydroxy-2-butanone 4-phosphate synthase (228 aa).

D-ribulose 5-phosphate contacts are provided by residues 37 to 38, Asp-42, 150 to 154, and Glu-174; these read RE and RRGHT. Glu-38 contacts Mg(2+). His-153 lines the Mg(2+) pocket.

The protein belongs to the DHBP synthase family. Homodimer. It depends on Mg(2+) as a cofactor. Mn(2+) serves as cofactor.

It catalyses the reaction D-ribulose 5-phosphate = (2S)-2-hydroxy-3-oxobutyl phosphate + formate + H(+). Its pathway is cofactor biosynthesis; riboflavin biosynthesis; 2-hydroxy-3-oxobutyl phosphate from D-ribulose 5-phosphate: step 1/1. Functionally, catalyzes the conversion of D-ribulose 5-phosphate to formate and 3,4-dihydroxy-2-butanone 4-phosphate. The sequence is that of 3,4-dihydroxy-2-butanone 4-phosphate synthase from Photobacterium profundum (strain SS9).